The primary structure comprises 100 residues: Trp operon repressor homolog (100 aa).

A DNA-binding region spans residues 59-82 (QRQISQMLGVGIATITRGSNELKS). Positions 78–93 (NELKSKSDTDKDKLKT) are enriched in basic and acidic residues. The disordered stretch occupies residues 78 to 100 (NELKSKSDTDKDKLKTLLEQGAQ).

It belongs to the TrpR family. Homodimer.

The protein resides in the cytoplasm. In terms of biological role, this protein is an aporepressor. When complexed with L-tryptophan it binds the operator region of the trp operon and prevents the initiation of transcription. This is Trp operon repressor homolog from Vibrio campbellii (strain ATCC BAA-1116).